Consider the following 36-residue polypeptide: Photosystem I reaction center subunit VIII (36 aa).

A helical membrane pass occupies residues 9 to 29; sequence ILVPLVGLVFPAITMVSLFLY.

It belongs to the PsaI family.

It localises to the plastid. The protein resides in the chloroplast thylakoid membrane. May help in the organization of the PsaL subunit. The chain is Photosystem I reaction center subunit VIII from Zygnema circumcarinatum (Green alga).